The chain runs to 105 residues: MPLFARLCQPQSRRMFSSISSFSALSVLRPQTGMLLNSSPLKTPSFTPLGFGLIGQRRWKSRGNTYQPSTLKRKRTFGFLARAKSKQGSKILKRRKLKGRWFLSH.

The transit peptide at 1–16 (MPLFARLCQPQSRRMF) directs the protein to the mitochondrion.

It belongs to the bacterial ribosomal protein bL34 family. As to quaternary structure, component of the mitochondrial large ribosomal subunit (mt-LSU). Mature yeast 74S mitochondrial ribosomes consist of a small (37S) and a large (54S) subunit. The 37S small subunit contains a 15S ribosomal RNA (15S mt-rRNA) and 34 different proteins. The 54S large subunit contains a 21S rRNA (21S mt-rRNA) and 46 different proteins.

The protein resides in the mitochondrion. Component of the mitochondrial ribosome (mitoribosome), a dedicated translation machinery responsible for the synthesis of mitochondrial genome-encoded proteins, including at least some of the essential transmembrane subunits of the mitochondrial respiratory chain. The mitoribosomes are attached to the mitochondrial inner membrane and translation products are cotranslationally integrated into the membrane. The chain is Large ribosomal subunit protein bL34m from Saccharomyces cerevisiae (strain ATCC 204508 / S288c) (Baker's yeast).